The primary structure comprises 282 residues: MSKTVRIPDMFLKASAASKRKSASNTENIPEKVPAGNENQEVKKMKLQAPEPTEILLKSLLTGESWSKLLEEEFKKGYISKIEKFLNSEVNKGKQVFPPPTQIFTTFNLLPFDEISVVIIGQDPYHDDNQAHGLSFSVQKGVKPPPSLKNIYKELESDIEGFKRPDHGNLLGWTRQGVFMLNATLTVRAHEANSHAKIGWQTFTDTVIRIISRQSEKPIVFLLWGGFAHKKEELIDTKKHVVIKTAHPSPLSARKWWGCKCFSKCNTELENSGRNPINWADL.

The disordered stretch occupies residues 15 to 40 (SAASKRKSASNTENIPEKVPAGNENQ). Asp123 acts as the Proton acceptor in catalysis.

Belongs to the uracil-DNA glycosylase (UDG) superfamily. UNG family.

It localises to the mitochondrion. The protein resides in the nucleus. The catalysed reaction is Hydrolyzes single-stranded DNA or mismatched double-stranded DNA and polynucleotides, releasing free uracil.. With respect to regulation, inhibited by UGI, a B.subtilis bacteriophage PBS2 peptide inhibitor. Its function is as follows. Excises uracil residues from the DNA which can arise as a result of misincorporation of dUMP residues by DNA polymerase or due to deamination of cytosine. The protein is Uracil-DNA glycosylase of Caenorhabditis elegans.